The following is a 426-amino-acid chain: UDP-N-acetylglucosamine 1-carboxyvinyltransferase (426 aa).

22-23 (KN) is a binding site for phosphoenolpyruvate. Residue Arg-93 coordinates UDP-N-acetyl-alpha-D-glucosamine. Cys-117 functions as the Proton donor in the catalytic mechanism. Position 117 is a 2-(S-cysteinyl)pyruvic acid O-phosphothioketal (Cys-117). UDP-N-acetyl-alpha-D-glucosamine is bound by residues 162-165 (KVSV), Asp-307, and Ile-329.

This sequence belongs to the EPSP synthase family. MurA subfamily.

It localises to the cytoplasm. It catalyses the reaction phosphoenolpyruvate + UDP-N-acetyl-alpha-D-glucosamine = UDP-N-acetyl-3-O-(1-carboxyvinyl)-alpha-D-glucosamine + phosphate. It participates in cell wall biogenesis; peptidoglycan biosynthesis. In terms of biological role, cell wall formation. Adds enolpyruvyl to UDP-N-acetylglucosamine. The polypeptide is UDP-N-acetylglucosamine 1-carboxyvinyltransferase (Haemophilus ducreyi (strain 35000HP / ATCC 700724)).